The sequence spans 373 residues: MNLNKIRKFFRESHIFFRDFLNKRFPPYNVEQPIPETEEFTLINADANLASLTENVLPNFPIDVVFTWVDNTDKAWQEQYYRTLQPIDQEDIGLYATDPARFSNHNELFYSVQAVQKFMPWVRNIFIVTADQKPKWLDENIHSKIKLINHSQLIDAKYLPTFNSHVIEANLYKIPDLSEHFIYFNDDVFVARPLMPNHFFENNGLASLFVANKSFQKMRQRGLITPTLTASEHALKLLKRHYPTININTPLVHTYVPLRKTSFQKAWSLFEDEINSFLNNKVRHNSELNMASFLIPWLMYLDGYATPKREICYYFNIRSSHAQTQYKKLLFEKEHLHMPHSFCINDSSSNNADKNYALHFRNFMDTYFEIETE.

Belongs to the stealth family.

Part of a capsule gene locus. Expression was not detected under standard growth conditions. The sequence is that of Capsular polysaccharide phosphotransferase from Neisseria meningitidis serogroup B.